The primary structure comprises 521 residues: Protein NRT1/ PTR FAMILY 5.5 (521 aa).

12 helical membrane passes run 3 to 23 (VLSWAFTVAWFTLWMLMLYLT), 35 to 55 (AIVNVFAGVSAIGHLGMQFLV), 62 to 82 (FWMLCLSTLAFSFGFGFLAIS), 96 to 116 (FYVALTVISVGIFGRSISLGV), 134 to 154 (LVSFVIGNVGNFVFLLLAAIA), 165 to 185 (FTIPSGCEVLAMLIFISGACS), 279 to 299 (VPLFATSLISGIVFSLGNTFF), 310 to 327 (FGSWNLPLPLLLLFSEAA), 356 to 376 (PYGIPVSIILSIFCCSIAAHV), 394 to 414 (VPMSVFWLLPQYILLGSITGI), 440 to 460 (VGVCGVGIMSNIALVSLVGSV), and 478 to 498 (YYWVITVFCMFNLLLYFIVTY).

The protein belongs to the major facilitator superfamily. Proton-dependent oligopeptide transporter (POT/PTR) (TC 2.A.17) family. In terms of tissue distribution, expressed in roots.

The protein localises to the membrane. The polypeptide is Protein NRT1/ PTR FAMILY 5.5 (NPF5.5) (Arabidopsis thaliana (Mouse-ear cress)).